The sequence spans 237 residues: Cysteine-rich venom protein ENH2 (237 aa).

The signal sequence occupies residues 1 to 18 (MIVFILLSLAAVLQQFVA). The 129-residue stretch at 37–165 (VDMHNSFRRS…PYNYFYVCQY (129 aa)) folds into the SCP domain. 7 disulfide bridges follow: Cys74-Cys152, Cys91-Cys166, Cys147-Cys163, Cys185-Cys192, Cys188-Cys197, Cys210-Cys228, and Cys219-Cys232. One can recognise a ShKT domain in the interval 201–237 (CPITNTFTNCDSLLQQNSCEDSYIKTNCGASCFGQDK).

Belongs to the CRISP family. As to expression, expressed by the venom gland.

It localises to the secreted. In terms of biological role, blocks contraction of smooth muscle elicited by high potassium-induced depolarization, but does not block caffeine-stimulated contraction. May target voltage-gated calcium channels on smooth muscle. This Pseudoferania polylepis (Macleay's water snake) protein is Cysteine-rich venom protein ENH2.